The sequence spans 365 residues: Heme A synthase (365 aa).

A run of 8 helical transmembrane segments spans residues 17-37 (AVRI…LVGG), 107-127 (VIGI…AIGP), 132-152 (ALWG…WMVA), 164-184 (VRLA…VWTL), 203-223 (AIAL…VAGL), 264-283 (QFDH…WHAI), 296-316 (GALW…LTVL), and 320-340 (PIGL…LAVL). Histidine 267 contributes to the heme binding site. Histidine 327 provides a ligand contact to heme.

It belongs to the COX15/CtaA family. Type 2 subfamily. In terms of assembly, interacts with CtaB. Heme b is required as a cofactor.

Its subcellular location is the cell membrane. The catalysed reaction is Fe(II)-heme o + 2 A + H2O = Fe(II)-heme a + 2 AH2. It participates in porphyrin-containing compound metabolism; heme A biosynthesis; heme A from heme O: step 1/1. Functionally, catalyzes the conversion of heme O to heme A by two successive hydroxylations of the methyl group at C8. The first hydroxylation forms heme I, the second hydroxylation results in an unstable dihydroxymethyl group, which spontaneously dehydrates, resulting in the formyl group of heme A. This is Heme A synthase from Rhodopseudomonas palustris (strain HaA2).